Consider the following 252-residue polypeptide: Imidazole glycerol phosphate synthase subunit HisF (252 aa).

Residues aspartate 11 and aspartate 130 contribute to the active site.

The protein belongs to the HisA/HisF family. As to quaternary structure, heterodimer of HisH and HisF.

It localises to the cytoplasm. The enzyme catalyses 5-[(5-phospho-1-deoxy-D-ribulos-1-ylimino)methylamino]-1-(5-phospho-beta-D-ribosyl)imidazole-4-carboxamide + L-glutamine = D-erythro-1-(imidazol-4-yl)glycerol 3-phosphate + 5-amino-1-(5-phospho-beta-D-ribosyl)imidazole-4-carboxamide + L-glutamate + H(+). It participates in amino-acid biosynthesis; L-histidine biosynthesis; L-histidine from 5-phospho-alpha-D-ribose 1-diphosphate: step 5/9. IGPS catalyzes the conversion of PRFAR and glutamine to IGP, AICAR and glutamate. The HisF subunit catalyzes the cyclization activity that produces IGP and AICAR from PRFAR using the ammonia provided by the HisH subunit. In Sulfurihydrogenibium sp. (strain YO3AOP1), this protein is Imidazole glycerol phosphate synthase subunit HisF.